Here is a 103-residue protein sequence, read N- to C-terminus: Large ribosomal subunit protein bL21 (103 aa).

This sequence belongs to the bacterial ribosomal protein bL21 family. As to quaternary structure, part of the 50S ribosomal subunit. Contacts protein L20.

In terms of biological role, this protein binds to 23S rRNA in the presence of protein L20. This chain is Large ribosomal subunit protein bL21, found in Kocuria rhizophila (strain ATCC 9341 / DSM 348 / NBRC 103217 / DC2201).